The sequence spans 550 residues: CTP synthase (550 aa).

The segment at 1–271 is amidoligase domain; that stretch reads MTRYIFITGG…DAEVLDVFGM (271 aa). Position 13 (Ser-13) interacts with CTP. UTP is bound at residue Ser-13. 14–19 is an ATP binding site; it reads SLGKGL. Residue Tyr-54 participates in L-glutamine binding. Asp-71 lines the ATP pocket. Mg(2+)-binding residues include Asp-71 and Glu-145. Residues 152–154, 192–197, and Lys-228 each bind CTP; these read DIE and KTKPTQ. UTP-binding positions include 192–197 and Lys-228; that span reads KTKPTQ. The Glutamine amidotransferase type-1 domain maps to 297–549; it reads TIAVVGKYTV…IAAAKEQGRL (253 aa). Gly-361 contacts L-glutamine. The Nucleophile; for glutamine hydrolysis role is filled by Cys-388. L-glutamine contacts are provided by residues 389-392, Glu-412, and Arg-477; that span reads FGMQ. Catalysis depends on residues His-522 and Glu-524.

The protein belongs to the CTP synthase family. In terms of assembly, homotetramer.

The enzyme catalyses UTP + L-glutamine + ATP + H2O = CTP + L-glutamate + ADP + phosphate + 2 H(+). It catalyses the reaction L-glutamine + H2O = L-glutamate + NH4(+). It carries out the reaction UTP + NH4(+) + ATP = CTP + ADP + phosphate + 2 H(+). It functions in the pathway pyrimidine metabolism; CTP biosynthesis via de novo pathway; CTP from UDP: step 2/2. Its activity is regulated as follows. Allosterically activated by GTP, when glutamine is the substrate; GTP has no effect on the reaction when ammonia is the substrate. The allosteric effector GTP functions by stabilizing the protein conformation that binds the tetrahedral intermediate(s) formed during glutamine hydrolysis. Inhibited by the product CTP, via allosteric rather than competitive inhibition. Catalyzes the ATP-dependent amination of UTP to CTP with either L-glutamine or ammonia as the source of nitrogen. Regulates intracellular CTP levels through interactions with the four ribonucleotide triphosphates. This chain is CTP synthase, found in Caulobacter sp. (strain K31).